We begin with the raw amino-acid sequence, 897 residues long: Coiled-coil domain-containing protein lobo (897 aa).

Residues 27–49 (EIDEQRRSQGSESDFADEMEGEF) are disordered. The segment covering 40–49 (DFADEMEGEF) has biased composition (acidic residues). Coiled-coil stretches lie at residues 269–306 (DLKS…DLEL) and 801–858 (SLLN…QRLT).

The protein belongs to the DRC7 family. As to expression, testis-specific (at protein level).

It is found in the cell projection. Its subcellular location is the cilium. The protein resides in the flagellum. It localises to the cytoplasm. The protein localises to the cytoskeleton. It is found in the cilium axoneme. Functionally, key component of the nexin-dynein regulatory complex (N-DRC), essential for N-DRC integrity. Involved in the regulation of flagellar motility. Involved in sperm motility. Required for the sperm to enter in the coiled storage seminal receptacle (SR) tubule. This is Coiled-coil domain-containing protein lobo (lobo) from Drosophila melanogaster (Fruit fly).